Here is a 158-residue protein sequence, read N- to C-terminus: 6,7-dimethyl-8-ribityllumazine synthase (158 aa).

5-amino-6-(D-ribitylamino)uracil contacts are provided by residues F23, 61 to 63 (SFE), and 85 to 87 (AVI). A (2S)-2-hydroxy-3-oxobutyl phosphate-binding site is contributed by 90–91 (ET). The active-site Proton donor is the H93. Residue F118 coordinates 5-amino-6-(D-ribitylamino)uracil. R132 provides a ligand contact to (2S)-2-hydroxy-3-oxobutyl phosphate.

This sequence belongs to the DMRL synthase family.

It carries out the reaction (2S)-2-hydroxy-3-oxobutyl phosphate + 5-amino-6-(D-ribitylamino)uracil = 6,7-dimethyl-8-(1-D-ribityl)lumazine + phosphate + 2 H2O + H(+). The protein operates within cofactor biosynthesis; riboflavin biosynthesis; riboflavin from 2-hydroxy-3-oxobutyl phosphate and 5-amino-6-(D-ribitylamino)uracil: step 1/2. In terms of biological role, catalyzes the formation of 6,7-dimethyl-8-ribityllumazine by condensation of 5-amino-6-(D-ribitylamino)uracil with 3,4-dihydroxy-2-butanone 4-phosphate. This is the penultimate step in the biosynthesis of riboflavin. The protein is 6,7-dimethyl-8-ribityllumazine synthase of Prochlorococcus marinus (strain AS9601).